A 531-amino-acid polypeptide reads, in one-letter code: MTTKPEKIIIFDTTLRDGEQCPGATLNIDEKLAIAKQLARLGVDIIEAGFAFASPGDFEAVHKIAQTVGTQSGPVICSLARARHDDIKAAAEAIKPAAKGRIHTFIATSDIHLQYKLKKTRPEVIAIAEEMVAYAKSFTDDVEFSPEDAGRSDPEFLYQVLERAIAAGATTINIPDTVGYTTPSEFGAIIKGIKENVPNIDQAIISVHGHNDLGLAVANFLEAVKNGARQLECTINGIGERAGNAALEELVMAMHVRRQYFNPFLGRHPDSEEALTNIDTKQIYKTSRLVSNLTGMLVQPNKAIVGANAFAHESGIHQDGVLKNKLTYEIMDAQLIGLTDNQIVLGKHSGRNAFRTRLKELGFELSETELNKAFVKFKEVADKKKEISDWDLEAIVNDEIQQAPDLFRVELVQVSCGSNARPTATVTLRTPDGEELTDAAIGTGPVDAVYKAINRVVNVPNQLIEFSVQSVTAGIDAIGEVTIRLRYESRVFSGHAANTDIIVASAQAYVNALNRLYASLQTQDKQTEVTA.

The 277-residue stretch at 8–284 (IIIFDTTLRD…LTNIDTKQIY (277 aa)) folds into the Pyruvate carboxyltransferase domain. 4 residues coordinate Mn(2+): Asp17, His208, His210, and Asn244. Residues 408 to 531 (RVELVQVSCG…TQDKQTEVTA (124 aa)) form a regulatory domain region.

This sequence belongs to the alpha-IPM synthase/homocitrate synthase family. LeuA type 1 subfamily. As to quaternary structure, homodimer. It depends on Mn(2+) as a cofactor.

It localises to the cytoplasm. The catalysed reaction is 3-methyl-2-oxobutanoate + acetyl-CoA + H2O = (2S)-2-isopropylmalate + CoA + H(+). The protein operates within amino-acid biosynthesis; L-leucine biosynthesis; L-leucine from 3-methyl-2-oxobutanoate: step 1/4. Its function is as follows. Catalyzes the condensation of the acetyl group of acetyl-CoA with 3-methyl-2-oxobutanoate (2-ketoisovalerate) to form 3-carboxy-3-hydroxy-4-methylpentanoate (2-isopropylmalate). The sequence is that of 2-isopropylmalate synthase from Nostoc sp. (strain PCC 7120 / SAG 25.82 / UTEX 2576).